A 470-amino-acid chain; its full sequence is Nuclear receptor subfamily 0 group B member 1 (470 aa).

Tandem repeats lie at residues 1–67 (MAGE…YRCC), 68–133 (FCGK…YRCC), and 134–200 (FCGE…YRCC). A 4 X 67 AA tandem repeats region spans residues 1–253 (MAGENHQWQG…RPVALKSPQV (253 aa)). Short sequence motifs (LXXLL motif) lie at residues 13-17 (LYNML), 80-84 (LYSML), and 146-150 (LYSLL). Residues 201-253 (FCGEDHPQQGSTLYCMPTSTNQAQAAPEERPRAPWWDTSSGALRPVALKSPQV) form a 4; truncated repeat. The 265-residue stretch at 205-469 (DHPQQGSTLY…DMMLEMLCTK (265 aa)) folds into the NR LBD domain. The AF-2 motif signature appears at 461–466 (MMLEML).

It belongs to the nuclear hormone receptor family. NR0 subfamily. In terms of assembly, homodimer. Interacts with NR5A1, NR5A2, NR0B2 and with COPS2. Interacts with ESRRB; represses ESRRB activity at the GATA6 promoter.

It localises to the nucleus. The protein resides in the cytoplasm. Nuclear receptor that lacks a DNA-binding domain and acts as a corepressor that inhibits the transcriptional activity of other nuclear receptors through heterodimeric interactions. Component of a cascade required for the development of the hypothalamic-pituitary-adrenal-gonadal axis. May also have a role in the development of the embryo and in the maintenance of embryonic stem cell pluripotency. This is Nuclear receptor subfamily 0 group B member 1 (NR0B1) from Pan troglodytes (Chimpanzee).